Reading from the N-terminus, the 120-residue chain is NAD(P)H-quinone oxidoreductase subunit 3, chloroplastic (120 aa).

The next 3 membrane-spanning stretches (helical) occupy residues 7 to 27, 63 to 83, and 89 to 109; these read YDSF…AFSI, YMFA…YPWA, and LGLF…VGLV.

It belongs to the complex I subunit 3 family. As to quaternary structure, NDH is composed of at least 16 different subunits, 5 of which are encoded in the nucleus.

It is found in the plastid. It localises to the chloroplast thylakoid membrane. The enzyme catalyses a plastoquinone + NADH + (n+1) H(+)(in) = a plastoquinol + NAD(+) + n H(+)(out). The catalysed reaction is a plastoquinone + NADPH + (n+1) H(+)(in) = a plastoquinol + NADP(+) + n H(+)(out). In terms of biological role, NDH shuttles electrons from NAD(P)H:plastoquinone, via FMN and iron-sulfur (Fe-S) centers, to quinones in the photosynthetic chain and possibly in a chloroplast respiratory chain. The immediate electron acceptor for the enzyme in this species is believed to be plastoquinone. Couples the redox reaction to proton translocation, and thus conserves the redox energy in a proton gradient. The polypeptide is NAD(P)H-quinone oxidoreductase subunit 3, chloroplastic (Adiantum capillus-veneris (Maidenhair fern)).